A 902-amino-acid chain; its full sequence is Cytosolic carboxypeptidase 2 (902 aa).

One can recognise a Peptidase M14 domain in the interval Y396–C666. Positions 462, 465, and 558 each coordinate Zn(2+). E630 (proton donor/acceptor) is an active-site residue. The segment covering F746–K758 has biased composition (basic residues). 2 disordered regions span residues F746–M770 and F796–R879. Residues V853–E866 are compositionally biased toward polar residues.

It belongs to the peptidase M14 family. In terms of assembly, interacts with RARRES1, KIF11 AND MAPRE1. Requires Zn(2+) as cofactor.

The protein localises to the cytoplasm. The protein resides in the cytosol. It localises to the cytoskeleton. Its subcellular location is the microtubule organizing center. It is found in the centrosome. The protein localises to the centriole. The protein resides in the cilium basal body. The catalysed reaction is (L-glutamyl)(n+1)-gamma-L-glutamyl-L-glutamyl-[protein] + H2O = (L-glutamyl)(n)-gamma-L-glutamyl-L-glutamyl-[protein] + L-glutamate. Its activity is regulated as follows. Inhibited by RARRES1. Functionally, metallocarboxypeptidase that mediates deglutamylation of tubulin and non-tubulin target proteins. Catalyzes the removal of polyglutamate side chains present on the gamma-carboxyl group of glutamate residues within the C-terminal tail of tubulin protein. Specifically cleaves tubulin long-side-chains, while it is not able to remove the branching point glutamate. Also catalyzes the removal of polyglutamate residues from the carboxy-terminus of non-tubulin proteins such as MYLK. In Homo sapiens (Human), this protein is Cytosolic carboxypeptidase 2.